Here is a 640-residue protein sequence, read N- to C-terminus: uncharacterized protein (640 aa).

Residues 184–328 (VKRDTIFIIK…KVQRSIDTMI (145 aa)) form the TIR domain. The interval 613–640 (LPNDLDDEDEELDDSTLGRPDSDEEGGE) is disordered. Residues 616–626 (DLDDEDEELDD) are compositionally biased toward acidic residues.

This is an uncharacterized protein from Sinorhizobium fredii (strain NBRC 101917 / NGR234).